Here is a 202-residue protein sequence, read N- to C-terminus: Small ribosomal subunit protein uS3 (202 aa).

Residues 18 to 87 (LNEYLQRQLV…NPQIDVVEVP (70 aa)) form the KH type-2 domain.

It belongs to the universal ribosomal protein uS3 family. As to quaternary structure, part of the 30S ribosomal subunit.

Functionally, binds the lower part of the 30S subunit head. In Thermofilum pendens (strain DSM 2475 / Hrk 5), this protein is Small ribosomal subunit protein uS3.